The following is a 121-amino-acid chain: Estrogen receptor (121 aa).

Positions 1-121 (LFAPNLLLDR…IRHMSNKGME (121 aa)) constitute an NR LBD domain. Cys45 carries the S-palmitoyl cysteine lipid modification.

This sequence belongs to the nuclear hormone receptor family. NR3 subfamily. Binds DNA as a homodimer. Can form a heterodimer with ESR2. Interacts with coactivator NCOA5. Interacts with NCOA7; the interaction is ligand-inducible. Interacts with AKAP13, CUEDC2, HEXIM1, KDM5A, MAP1S, PELP1, SMARD1, and UBE1C. Interacts with MUC1; the interaction is stimulated by 7 beta-estradiol (E2) and enhances ERS1-mediated transcription. Interacts with DNTTIP2, and UIMC1. Interacts with KMT2D/MLL2. Interacts with ATAD2; the interaction is enhanced by estradiol. Interacts with KIF18A and LDB1. Interacts with RLIM (via its C-terminus). Interacts with MACROD1. Interacts with SH2D4A and PLCG. Interacts with SH2D4A; the interaction blocks binding to PLCG and inhibits estrogen-induced cell proliferation. Interacts with DYNLL1. Interacts with CCDC62; the interaction requires estradiol and appears to enhance the transcription of target genes. Interacts with NR2C1; the interaction prevents homodimerization of ESR1 and suppresses its transcriptional activity and cell growth. Interacts with DNAAF4. Interacts with PRMT2. Interacts with PI3KR1 or PIK3R2, SRC and PTK2/FAK1. Interacts with RBFOX2. Interacts with EP300; the interaction is estrogen-dependent and enhanced by CITED1. Interacts with CITED1; the interaction is estrogen-dependent. Interacts with FAM120B, FOXL2, PHB2 and SLC30A9. Interacts with coactivators NCOA3 and NCOA6. Interacts with STK3/MST2 only in the presence of SAV1 and vice-versa. Binds to CSNK1D. Interacts with NCOA2; NCOA2 can interact with ESR1 AF-1 and AF-2 domains simultaneously and mediate their transcriptional synergy. Interacts with DDX5. Interacts with NCOA1; the interaction seems to require a self-association of N-terminal and C-terminal regions. Interacts with ZNF366, DDX17, NFKB1, RELA, SP1 and SP3. Interacts with NRIP1. Interacts with GPER1; the interaction occurs in an estrogen-dependent manner. Interacts with CLOCK and the interaction is stimulated by estrogen. Interacts with TRIP4 (ufmylated); estrogen dependent. Interacts with LMTK3; the interaction phosphorylates ESR1 (in vitro) and protects it against proteasomal degradation. Interacts with CCAR2 (via N-terminus) in a ligand-independent manner. Interacts with ZFHX3. Interacts with SFR1 in a ligand-dependent and -independent manner. Interacts with DCAF13, LATS1 and DCAF1; regulates ESR1 ubiquitination and ubiquitin-mediated proteasomal degradation. Interacts (via DNA-binding domain) with POU4F2 (C-terminus); this interaction increases the estrogen receptor ESR1 transcriptional activity in a DNA- and ligand 17-beta-estradiol-independent manner. Interacts with ESRRB isoform 1. Interacts with UBE3A and WBP2. Interacts with GTF2B. Interacts with RBM39. In the absence of hormonal ligand, interacts with TACC1. Interacts with BAG1; the interaction is promoted in the absence of estradiol (17-beta-estradiol/E2). Interacts with and ubiquitinated by STUB1; the interaction is promoted in the absence of estradiol (17-beta-estradiol/E2). Interacts with NEDD8. Post-translationally, ubiquitinated; regulated by LATS1 via DCAF1 it leads to ESR1 proteasomal degradation. Deubiquitinated by OTUB1. Ubiquitinated by STUB1/CHIP; in the CA1 hippocampal region following loss of endogenous circulating estradiol (17-beta-estradiol/E2). Ubiquitinated by UBR5, leading to its degradation: UBR5 specifically recognizes and binds ligand-bound ESR1 when it is not associated with coactivators (NCOAs). In presence of NCOAs, the UBR5-degron is not accessible, preventing its ubiquitination and degradation. In terms of processing, palmitoylated at Cys-45 by ZDHHC7 and ZDHHC21. Palmitoylation is required for plasma membrane targeting and for rapid intracellular signaling via ERK and AKT kinases and cAMP generation, but not for signaling mediated by the nuclear hormone receptor. Phosphorylated by cyclin A/CDK2 and CK1. Phosphorylation probably enhances transcriptional activity. Dephosphorylation by PPP5C inhibits its transactivation activity. Phosphorylated by LMTK3 (in vitro). Post-translationally, dimethylated by PRMT1. Demethylated by JMJD6.

It localises to the nucleus. Its subcellular location is the cytoplasm. It is found in the golgi apparatus. The protein resides in the cell membrane. Functionally, nuclear hormone receptor. The steroid hormones and their receptors are involved in the regulation of eukaryotic gene expression and affect cellular proliferation and differentiation in target tissues. Ligand-dependent nuclear transactivation involves either direct homodimer binding to a palindromic estrogen response element (ERE) sequence or association with other DNA-binding transcription factors, such as AP-1/c-Jun, c-Fos, ATF-2, Sp1 and Sp3, to mediate ERE-independent signaling. Ligand binding induces a conformational change allowing subsequent or combinatorial association with multiprotein coactivator complexes through LXXLL motifs of their respective components. Mutual transrepression occurs between the estrogen receptor (ER) and NF-kappa-B in a cell-type specific manner. Decreases NF-kappa-B DNA-binding activity and inhibits NF-kappa-B-mediated transcription from the IL6 promoter and displace RELA/p65 and associated coregulators from the promoter. Recruited to the NF-kappa-B response element of the CCL2 and IL8 promoters and can displace CREBBP. Present with NF-kappa-B components RELA/p65 and NFKB1/p50 on ERE sequences. Can also act synergistically with NF-kappa-B to activate transcription involving respective recruitment adjacent response elements; the function involves CREBBP. Can activate the transcriptional activity of TFF1. Also mediates membrane-initiated estrogen signaling involving various kinase cascades. Essential for MTA1-mediated transcriptional regulation of BRCA1 and BCAS3. Maintains neuronal survival in response to ischemic reperfusion injury when in the presence of circulating estradiol (17-beta-estradiol/E2). This is Estrogen receptor (ESR1) from Macaca mulatta (Rhesus macaque).